A 585-amino-acid chain; its full sequence is Aspartate--tRNA ligase (585 aa).

An L-aspartate-binding site is contributed by Glu169. Residues 193 to 196 are aspartate; it reads QLFK. Arg215 contributes to the L-aspartate binding site. Residues 215–217 and Gln224 each bind ATP; that span reads RDE. His443 is an L-aspartate binding site. Glu478 is a binding site for ATP. Arg485 serves as a coordination point for L-aspartate. 530-533 is a binding site for ATP; sequence GLDR.

Belongs to the class-II aminoacyl-tRNA synthetase family. Type 1 subfamily. Homodimer.

The protein localises to the cytoplasm. The catalysed reaction is tRNA(Asp) + L-aspartate + ATP = L-aspartyl-tRNA(Asp) + AMP + diphosphate. Functionally, catalyzes the attachment of L-aspartate to tRNA(Asp) in a two-step reaction: L-aspartate is first activated by ATP to form Asp-AMP and then transferred to the acceptor end of tRNA(Asp). This is Aspartate--tRNA ligase from Pseudothermotoga lettingae (strain ATCC BAA-301 / DSM 14385 / NBRC 107922 / TMO) (Thermotoga lettingae).